Consider the following 422-residue polypeptide: Adhesin YadA (422 aa).

Residues Met1–Ala25 form the signal peptide. Residues Asn26–Tyr330 form a surface exposed passenger domain region. Positions Glu216–Leu362 form a coiled coil. Residues Thr331–Gly369 form an outer membrane translocation of the passenger domain region. The next 4 beta stranded transmembrane spans lie at Gly369–Gly379, Ser383–Val394, Lys401–Ala407, and Asp411–Trp422. The tract at residues Lys370–Trp422 is translocator domain.

This sequence belongs to the autotransporter-2 (AT-2) (TC 1.B.40) family. As to quaternary structure, homotrimer.

It is found in the cell surface. Its subcellular location is the cell outer membrane. Collagen-binding outer membrane protein forming a fibrillar matrix on the bacterial cell surface. Promotes initial attachment and invasion of eukaryotic cells. Also protects the bacteria by being responsible for agglutination, serum resistance, complement inactivation and phagocytosis resistance. The polypeptide is Adhesin YadA (yadA) (Yersinia enterocolitica).